A 190-amino-acid chain; its full sequence is MESKSDASVATTPIISSSSSPPPSLSPRVVLSPCAACKILRRRCAERCVLAPYFPPTDPAKFTIAHRVFGASNIIKFLQELPESQRTDAVNSMVYEAEARIRDPVYGCAGAIYHLQRQVSELQAQLAKAQVEMVNMQFQRSNLLELIYNMDQQQKQEQDNMSFESNDLGFLEDKSNTNSSMLWWDPLWTC.

The segment covering 1–11 (MESKSDASVAT) has biased composition (polar residues). Residues 1 to 27 (MESKSDASVATTPIISSSSSPPPSLSP) are disordered. The 102-residue stretch at 32–133 (SPCAACKILR…AQLAKAQVEM (102 aa)) folds into the LOB domain.

This sequence belongs to the LOB domain-containing protein family. Expressed in young shoots, roots, stems, leaves and flowers.

This is LOB domain-containing protein 1 (LBD1) from Arabidopsis thaliana (Mouse-ear cress).